The following is a 105-amino-acid chain: Large ribosomal subunit protein eL36 (105 aa).

Residues 86 to 105 (QAGKKKRDDIANINRKASAK) form a disordered region.

Belongs to the eukaryotic ribosomal protein eL36 family.

The chain is Large ribosomal subunit protein eL36 (rpl36) from Dictyostelium discoideum (Social amoeba).